Reading from the N-terminus, the 532-residue chain is MDVRRGGGGGRIVGAARRALTWGALPLPMRITNGLAMVSLVLSSCDLLRLCSDRERPLGGREFATVVYLVSLFAHPDAPATTTGDDDDGQGGSRRARPAAAEPAPMHGHGGGMMEADDEEIVAAVASGALPSHRLESRLGDCRRAARLRREALRRVTGRGVEGLPFDGMDYQAILGQCCEMPVGYVQLPVGVAGPLLLDGREYHVPMATTEGCLVASVNRGCRAISASGGAFSVLLRDAMSRAPAVKLPSAMRAAELKAFAEAPANFELLAAVFNRSSRFGRLQDIRCALAGRNLYMRFSCITGDAMGMNMVSKGVENVLGYLQNVFPDMDVISVSGNYCSDKKPTAVNWIEGRGKSVVCEAIIKGDVVQKVLKTTVEKLVELNIIKNLAGSAVAGALGGFNAHASNIVTALFIATGQDPAQNVESSQCITMLEEVNDGDDLHISVTMPSIEVGTIGGGTCLASQAACLNLLGVKGSNHGSPGANAKRLATIVAGSVLAGELSLLAALASGHLVKSHMMYNRSSKDVAKAAS.

Residues 63–83 traverse the membrane as a helical segment; that stretch reads FATVVYLVSLFAHPDAPATTT. A linker region spans residues 77 to 117; it reads DAPATTTGDDDDGQGGSRRARPAAAEPAPMHGHGGGMMEAD. Residues 78 to 111 form a disordered region; it reads APATTTGDDDDGQGGSRRARPAAAEPAPMHGHGG. Low complexity predominate over residues 98–107; that stretch reads PAAAEPAPMH. The segment at 118–532 is catalytic; the sequence is DEEIVAAVAS…SSKDVAKAAS (415 aa). Glu211 functions as the Charge relay system in the catalytic mechanism. Residue Asn275 is glycosylated (N-linked (GlcNAc...) asparagine). Catalysis depends on charge relay system residues Lys343 and Asp419. His517 (proton donor) is an active-site residue. Asn521 carries an N-linked (GlcNAc...) asparagine glycan.

Belongs to the HMG-CoA reductase family.

The protein resides in the endoplasmic reticulum membrane. It catalyses the reaction (R)-mevalonate + 2 NADP(+) + CoA = (3S)-3-hydroxy-3-methylglutaryl-CoA + 2 NADPH + 2 H(+). It functions in the pathway metabolic intermediate biosynthesis; (R)-mevalonate biosynthesis; (R)-mevalonate from acetyl-CoA: step 3/3. Catalyzes the synthesis of mevalonate. The specific precursor of all isoprenoid compounds present in plants. This is 3-hydroxy-3-methylglutaryl-coenzyme A reductase 1 (HMG1) from Oryza sativa subsp. japonica (Rice).